Here is a 450-residue protein sequence, read N- to C-terminus: Bifunctional protein GlmU (450 aa).

The tract at residues 1–221 (MRCIVLAAGM…SCEFIGINNR (221 aa)) is pyrophosphorylase. UDP-N-acetyl-alpha-D-glucosamine contacts are provided by residues 6–9 (LAAG), Lys-20, Gln-69, 74–75 (GT), 96–98 (YGD), Gly-135, Glu-150, Asn-165, and Asn-219. Asp-98 contacts Mg(2+). Residue Asn-219 participates in Mg(2+) binding. The interval 222-242 (IQLAQAEKFRRQWILEELMIK) is linker. The segment at 243-450 (GVTIVDPETT…VIDKRKKEED (208 aa)) is N-acetyltransferase. Residues Arg-324 and Lys-342 each coordinate UDP-N-acetyl-alpha-D-glucosamine. The Proton acceptor role is filled by His-354. Positions 357 and 368 each coordinate UDP-N-acetyl-alpha-D-glucosamine. Acetyl-CoA contacts are provided by Ala-371, Ser-396, Ala-414, and Arg-431.

This sequence in the N-terminal section; belongs to the N-acetylglucosamine-1-phosphate uridyltransferase family. The protein in the C-terminal section; belongs to the transferase hexapeptide repeat family. Homotrimer. It depends on Mg(2+) as a cofactor.

Its subcellular location is the cytoplasm. The catalysed reaction is alpha-D-glucosamine 1-phosphate + acetyl-CoA = N-acetyl-alpha-D-glucosamine 1-phosphate + CoA + H(+). It carries out the reaction N-acetyl-alpha-D-glucosamine 1-phosphate + UTP + H(+) = UDP-N-acetyl-alpha-D-glucosamine + diphosphate. It functions in the pathway nucleotide-sugar biosynthesis; UDP-N-acetyl-alpha-D-glucosamine biosynthesis; N-acetyl-alpha-D-glucosamine 1-phosphate from alpha-D-glucosamine 6-phosphate (route II): step 2/2. It participates in nucleotide-sugar biosynthesis; UDP-N-acetyl-alpha-D-glucosamine biosynthesis; UDP-N-acetyl-alpha-D-glucosamine from N-acetyl-alpha-D-glucosamine 1-phosphate: step 1/1. The protein operates within bacterial outer membrane biogenesis; LPS lipid A biosynthesis. In terms of biological role, catalyzes the last two sequential reactions in the de novo biosynthetic pathway for UDP-N-acetylglucosamine (UDP-GlcNAc). The C-terminal domain catalyzes the transfer of acetyl group from acetyl coenzyme A to glucosamine-1-phosphate (GlcN-1-P) to produce N-acetylglucosamine-1-phosphate (GlcNAc-1-P), which is converted into UDP-GlcNAc by the transfer of uridine 5-monophosphate (from uridine 5-triphosphate), a reaction catalyzed by the N-terminal domain. The chain is Bifunctional protein GlmU from Pseudothermotoga lettingae (strain ATCC BAA-301 / DSM 14385 / NBRC 107922 / TMO) (Thermotoga lettingae).